A 393-amino-acid polypeptide reads, in one-letter code: MTIFPKTLMLLGSGELGKEVAIAGKRLGCKVIACDRYEEAPAMQVADLAIVLDMNNHNSLQKTIRDYKPDVVIPEIEALAVEALKDIEKEGINVIPNARATAITMNRDQIRNLAAEKLAIKTANYGYASNIEELKEVSKKVGFPLLVKPVMSSSGKGQSLIKDKNDLEKAWDLAIKEARGDSKQVIIEEYINFDLEITLLTIKQSNHQTIFCPPIGHEQKGGDYQCSWQPQKLSFDQLKEAKSIAKKVTNELGGIGLFGVEFFIRGEEVIFSELSPRPHDTGLVTLISQNLNEFELHLRAILGLPIPSIECVSPSASRVILSQESFAKVAYKGIEKALEIQNSKIMIFGKPNTKKGRRMGVSLAQGKTLEEARFKADKSAKCIQIFEAKEAQS.

Residues 15-16 and E75 contribute to the N(1)-(5-phospho-beta-D-ribosyl)glycinamide site; that span reads EL. Residues R107, K148, 153-158, 188-191, and E196 contribute to the ATP site; these read SSGKGQ and EEYI. The region spanning 112-302 is the ATP-grasp domain; that stretch reads NLAAEKLAIK…EFELHLRAIL (191 aa). Residues E261 and E273 each contribute to the Mg(2+) site. N(1)-(5-phospho-beta-D-ribosyl)glycinamide-binding positions include D280, K350, and 357–358; that span reads RR.

This sequence belongs to the PurK/PurT family. In terms of assembly, homodimer.

The enzyme catalyses N(1)-(5-phospho-beta-D-ribosyl)glycinamide + formate + ATP = N(2)-formyl-N(1)-(5-phospho-beta-D-ribosyl)glycinamide + ADP + phosphate + H(+). Its pathway is purine metabolism; IMP biosynthesis via de novo pathway; N(2)-formyl-N(1)-(5-phospho-D-ribosyl)glycinamide from N(1)-(5-phospho-D-ribosyl)glycinamide (formate route): step 1/1. Its function is as follows. Involved in the de novo purine biosynthesis. Catalyzes the transfer of formate to 5-phospho-ribosyl-glycinamide (GAR), producing 5-phospho-ribosyl-N-formylglycinamide (FGAR). Formate is provided by PurU via hydrolysis of 10-formyl-tetrahydrofolate. In Prochlorococcus marinus (strain SARG / CCMP1375 / SS120), this protein is Formate-dependent phosphoribosylglycinamide formyltransferase.